A 300-amino-acid polypeptide reads, in one-letter code: Ubiquinone biosynthesis protein COQ4, mitochondrial (300 aa).

4 residues coordinate Zn(2+): His173, Asp174, His177, and Glu189.

The protein belongs to the COQ4 family. Component of a multi-subunit COQ enzyme complex, composed of at least COQ3, COQ4, COQ5, COQ6, COQ7 and COQ9. Zn(2+) serves as cofactor.

Its subcellular location is the mitochondrion inner membrane. It catalyses the reaction a 4-hydroxy-3-methoxy-5-(all-trans-polyprenyl)benzoate + H(+) = a 2-methoxy-6-(all-trans-polyprenyl)phenol + CO2. It functions in the pathway cofactor biosynthesis; ubiquinone biosynthesis. Lyase that catalyzes the C1-decarboxylation of 4-hydroxy-3-methoxy-5-(all-trans-polyprenyl)benzoic acid into 2-methoxy-6-(all-trans-polyprenyl)phenol during ubiquinone biosynthesis. The sequence is that of Ubiquinone biosynthesis protein COQ4, mitochondrial from Cryptococcus neoformans var. neoformans serotype D (strain JEC21 / ATCC MYA-565) (Filobasidiella neoformans).